Consider the following 503-residue polypeptide: Ell-associated factor Eaf (503 aa).

2 stretches are compositionally biased toward polar residues: residues 119-145 (TRNE…NQGA) and 167-186 (ENST…SRRN). Disordered regions lie at residues 119–220 (TRNE…PAWD), 250–360 (GHAN…SQSV), and 372–503 (GGVL…DDDD). The residue at position 196 (Ser196) is a Phosphoserine. Over residues 202 to 215 (SPSRPVPVHRSPQS) the composition is skewed to low complexity. Composition is skewed to polar residues over residues 250-273 (GHAN…STHI) and 298-307 (MAQQQQQHPS). Low complexity predominate over residues 308–337 (NYGRGYNGGHNHAQQQQQQQRNSPPRQRPS). Residues 385-400 (DSSDSDSGSDSDDSTE) are compositionally biased toward acidic residues. Low complexity-rich tracts occupy residues 406–437 (QGQQ…HHNQ), 454–472 (HQQQ…QKQQ), and 487–497 (LQNDLQLSSNS).

The protein belongs to the EAF family.

The protein localises to the nucleus. Its function is as follows. Promotes transcriptional elongation by Su(Tpl)/ELL. Essential for development. This is Ell-associated factor Eaf from Drosophila sechellia (Fruit fly).